A 366-amino-acid polypeptide reads, in one-letter code: Isopropyl malate dehydrogenase htyC (366 aa).

Val-71–Gly-73 contacts NADP(+). Substrate is bound by residues Arg-91 and Arg-130. Residues Asp-221, Asp-246, and Asp-250 each contribute to the Mg(2+) site. Residue Gly-277–Ile-282 participates in NADP(+) binding.

This sequence belongs to the isocitrate and isopropylmalate dehydrogenases family. As to quaternary structure, homodimer. Mg(2+) serves as cofactor. Requires Mn(2+) as cofactor.

The enzyme catalyses (2R,3S)-3-isopropylmalate + NAD(+) = 4-methyl-2-oxopentanoate + CO2 + NADH. It participates in antifungal biosynthesis. Its function is as follows. Isopropyl malate dehydrogenase; part of the gene cluster that mediates the de novo generation of L-homotyrosine from acetyl-CoA and 4-hydroxyphenyl-pyruvate. L-homotyrosine is a building block of echinocandin B, a fungal lipidated cyclic hexapeptide that acts as an antifungal agent. L-homotyrosine 4-hydroxyphenyl-pyruvate first undergoes an aldol-type condensation by htyA with the C-2 of acetyl-CoA followed by the release of CoA to form 2-(4-hydroxybenzyl)-malate. This is followed by isomerization of 2-(4-hydroxy-benzyl)-malate to 3-(4-hydroxybenzyl)-malate by htyD. Thereafter, 3-(4-hydroxybenzyl)-malate undergoes decarboxylation and oxidation to form 2-oxo-4-(4-hydroxybenzyl)butanoic acid, coupled to reduction of NAD(+) to NADH by htyC. The product then undergoes transamination catalyzed by htyB to form L-homotyrosine. This is Isopropyl malate dehydrogenase htyC from Aspergillus rugulosus (Emericella rugulosa).